The following is a 609-amino-acid chain: QWRF motif-containing protein 4 (609 aa).

Disordered stretches follow at residues 1–227 and 271–369; these read MQVG…IRGN and EVSS…TAQS. Composition is skewed to polar residues over residues 11 to 21 and 46 to 57; these read GKQQQSVSDAT and EVSSRYRSPTPT. Composition is skewed to low complexity over residues 98–110 and 129–143; these read PVSDVLVDLPVSS and SLSVSFQSDSVSVPV. The segment covering 151-180 has biased composition (polar residues); it reads VTSSTDRTLRPSSSNIAHKQQSETTSVTRK. Low complexity-rich tracts occupy residues 271 to 285 and 302 to 332; these read EVSSSTTSEDSSSTE and SAPGSRTASPSRSSFSSSSSSNSRGMSPSRG. The QWRF motif motif lies at 407–410; the sequence is QWRF. Residues 588-609 are disordered; sequence EEEVRDDAESSPLLPLSKFQWP.

Belongs to the QWRF family.

The polypeptide is QWRF motif-containing protein 4 (QWRF4) (Arabidopsis thaliana (Mouse-ear cress)).